The chain runs to 118 residues: Iron-sulfur cluster assembly protein CyaY (118 aa).

It belongs to the frataxin family.

Functionally, involved in iron-sulfur (Fe-S) cluster assembly. May act as a regulator of Fe-S biogenesis. This is Iron-sulfur cluster assembly protein CyaY from Buchnera aphidicola subsp. Baizongia pistaciae (strain Bp).